A 212-amino-acid chain; its full sequence is tRNA (guanine-N(7)-)-methyltransferase (212 aa).

Residues E44, D69, D96, and D118 each contribute to the S-adenosyl-L-methionine site. The active site involves D118. Substrate is bound at residue K122. The interaction with RNA stretch occupies residues 124–129 (RHEKRR). Substrate-binding positions include D154 and 191–194 (TEYE).

Belongs to the class I-like SAM-binding methyltransferase superfamily. TrmB family.

It catalyses the reaction guanosine(46) in tRNA + S-adenosyl-L-methionine = N(7)-methylguanosine(46) in tRNA + S-adenosyl-L-homocysteine. Its pathway is tRNA modification; N(7)-methylguanine-tRNA biosynthesis. In terms of biological role, catalyzes the formation of N(7)-methylguanine at position 46 (m7G46) in tRNA. This Streptococcus suis (strain 05ZYH33) protein is tRNA (guanine-N(7)-)-methyltransferase.